An 887-amino-acid polypeptide reads, in one-letter code: Alanine--tRNA ligase (887 aa).

Residues 425-441 show a composition bias toward basic and acidic residues; the sequence is MQEQKSRARSDRREKQQ. The segment at 425–448 is disordered; it reads MQEQKSRARSDRREKQQTGDGAGS. 4 residues coordinate Zn(2+): H569, H573, C672, and H676.

It belongs to the class-II aminoacyl-tRNA synthetase family. Zn(2+) serves as cofactor.

Its subcellular location is the cytoplasm. The enzyme catalyses tRNA(Ala) + L-alanine + ATP = L-alanyl-tRNA(Ala) + AMP + diphosphate. Catalyzes the attachment of alanine to tRNA(Ala) in a two-step reaction: alanine is first activated by ATP to form Ala-AMP and then transferred to the acceptor end of tRNA(Ala). Also edits incorrectly charged Ser-tRNA(Ala) and Gly-tRNA(Ala) via its editing domain. The polypeptide is Alanine--tRNA ligase (Chlorobium luteolum (strain DSM 273 / BCRC 81028 / 2530) (Pelodictyon luteolum)).